The sequence spans 156 residues: MGVIKAVAVINGNNNVKGSLQFIQDSTGVTHVKGRITGLTPGLHGFHIHALGDTTNGCNSTGPHFNPLKKDHGAPFDTERHAGDLGNVVAGADGVAEVSVRDTQIPLSGQHSILGRAVVVHADQDDLGRTGHELSKTTGNAGARVRCGIIGLQASV.

Cu cation contacts are provided by His47, His49, and His64. A disulfide bridge links Cys58 with Cys147. 4 residues coordinate Zn(2+): His64, His72, His81, and Asp84. His121 contributes to the Cu cation binding site.

The protein belongs to the Cu-Zn superoxide dismutase family. In terms of assembly, homodimer. It depends on Cu cation as a cofactor. Zn(2+) is required as a cofactor.

The protein localises to the cytoplasm. It carries out the reaction 2 superoxide + 2 H(+) = H2O2 + O2. Functionally, destroys radicals which are normally produced within the cells and which are toxic to biological systems. This Mesembryanthemum crystallinum (Common ice plant) protein is Superoxide dismutase [Cu-Zn] 2 (SODCC.2).